Consider the following 123-residue polypeptide: MARIAGVNIPTNKRVVIALTYIYGIGISLANKICESCNIDHNIRVVNLSDDEIIRIRNFIRENYVVEGDLRKEVSMNIKFLTDIGCYRGLRHRRGLPVRGQRTHTNAKTRKGRSRLPVAAKKK.

The tract at residues 97–123 (PVRGQRTHTNAKTRKGRSRLPVAAKKK) is disordered.

The protein belongs to the universal ribosomal protein uS13 family. Part of the 30S ribosomal subunit. Forms a loose heterodimer with protein S19. Forms two bridges to the 50S subunit in the 70S ribosome.

Its function is as follows. Located at the top of the head of the 30S subunit, it contacts several helices of the 16S rRNA. In the 70S ribosome it contacts the 23S rRNA (bridge B1a) and protein L5 of the 50S subunit (bridge B1b), connecting the 2 subunits; these bridges are implicated in subunit movement. Contacts the tRNAs in the A and P-sites. In Ehrlichia ruminantium (strain Gardel), this protein is Small ribosomal subunit protein uS13.